The primary structure comprises 350 residues: Bifunctional UDP-glucose 4-epimerase and UDP-xylose 4-epimerase 1 (350 aa).

NAD(+) contacts are provided by residues Gly-15 to Ile-17, Asp-36 to Asn-40, Asp-67 to Leu-68, Phe-89, and Lys-93. Ser-133 provides a ligand contact to substrate. Tyr-157 serves as the catalytic Proton acceptor. The NAD(+) site is built by Lys-161 and Tyr-185.

Belongs to the NAD(P)-dependent epimerase/dehydratase family. NAD(+) serves as cofactor.

The enzyme catalyses UDP-alpha-D-glucose = UDP-alpha-D-galactose. The catalysed reaction is UDP-beta-L-arabinopyranose = UDP-alpha-D-xylose. It functions in the pathway carbohydrate metabolism; galactose metabolism. Its pathway is nucleotide-sugar biosynthesis; UDP-L-arabinose biosynthesis; UDP-L-arabinose from UDP-alpha-D-xylose: step 1/1. It participates in cell wall biogenesis; cell wall polysaccharide biosynthesis. Inhibited by Hg(2+). Functionally, catalyzes the interconversion between UDP-glucose and UDP-galactose and the interconversion between UDP-arabinose and UDP-xylose. The polypeptide is Bifunctional UDP-glucose 4-epimerase and UDP-xylose 4-epimerase 1 (Pisum sativum (Garden pea)).